Here is a 922-residue protein sequence, read N- to C-terminus: Alpha-actinin, sarcomeric (922 aa).

Residues 1–252 are actin-binding; it reads MMENGGYVGQ…IMTYVSCYYH (252 aa). Calponin-homology (CH) domains lie at 36–140 and 149–255; these read KQQK…LRFA and MTAK…HAFQ. Spectrin repeat units lie at residues 253 to 393, 394 to 508, 509 to 629, and 630 to 742; these read AFQG…MVSD, ITNS…RCQR, ICDQ…SADL, and ISRK…TMET. 2 EF-hand domains span residues 776 to 811 and 817 to 852; these read EQLT…LGYS and QGDM…ESTD. Ca(2+) is bound by residues aspartate 789, asparagine 791, threonine 793, arginine 795, and glutamate 800.

The protein belongs to the alpha-actinin family. As to quaternary structure, homodimer; antiparallel.

Functionally, F-actin cross-linking protein which is thought to anchor actin to a variety of intracellular structures. This is a bundling protein. The chain is Alpha-actinin, sarcomeric (Actn) from Anopheles gambiae (African malaria mosquito).